The sequence spans 471 residues: E3 ubiquitin-protein ligase TRIM38 (471 aa).

Residues 16–62 (CSICKAMMSHPVSINCGHSYCKSCIQSYYCNVSPKTGWKMLGCPLCS) form an RING-type zinc finger. A B box-type zinc finger spans residues 90-131 (DQDMVCEEHEEKFNRFCEDDGQLLCWRCYWEDRHKGHTLAHV). The Zn(2+) site is built by Cys95, His98, Cys117, and His123. Positions 276–471 (CNVSELYFDV…PLFLPAINNQ (196 aa)) constitute a B30.2/SPRY domain.

Interacts (via B30.2/SPRY domain) with TAB2 and TAB3.

The protein localises to the cytoplasm. The enzyme catalyses S-ubiquitinyl-[E2 ubiquitin-conjugating enzyme]-L-cysteine + [acceptor protein]-L-lysine = [E2 ubiquitin-conjugating enzyme]-L-cysteine + N(6)-ubiquitinyl-[acceptor protein]-L-lysine.. It functions in the pathway protein modification; protein ubiquitination. The protein operates within protein modification; protein sumoylation. In terms of biological role, E3 ubiquitin-protein and E3 SUMO-protein ligase that acts as a regulator of innate immunity. Acts as a negative regulator of type I interferon IFN-beta production by catalyzing 'Lys-48'-linked polyubiquitination of AZI2/NAP1, leading to its degradation. Mediates 'Lys-48'-linked polyubiquitination and proteasomal degradation of the critical TLR adapter TICAM1, inhibiting TLR3-mediated type I interferon signaling. Acts as a positive regulator of the cGAS-STING pathway by acting as a E3 SUMO-protein ligase: mediates sumoylation of CGAS and STING, preventing their degradation and thereby activating the innate immune response to DNA virus. Also acts as a negative regulator of NF-kappa-B signaling independently of its E3 protein ligase activity by promoting lysosome-dependent degradation of TAB2 and TAB3 adapters. The sequence is that of E3 ubiquitin-protein ligase TRIM38 from Mus musculus (Mouse).